We begin with the raw amino-acid sequence, 349 residues long: 4-hydroxythreonine-4-phosphate dehydrogenase (349 aa).

Position 136 (threonine 136) interacts with substrate. A divalent metal cation-binding residues include histidine 171, histidine 216, and histidine 281. Substrate contacts are provided by lysine 289, asparagine 298, and arginine 307.

Belongs to the PdxA family. As to quaternary structure, homodimer. It depends on a divalent metal cation as a cofactor.

It is found in the cytoplasm. It carries out the reaction 4-(phosphooxy)-L-threonine + NAD(+) = 3-amino-2-oxopropyl phosphate + CO2 + NADH. It participates in cofactor biosynthesis; pyridoxine 5'-phosphate biosynthesis; pyridoxine 5'-phosphate from D-erythrose 4-phosphate: step 4/5. In terms of biological role, catalyzes the NAD(P)-dependent oxidation of 4-(phosphooxy)-L-threonine (HTP) into 2-amino-3-oxo-4-(phosphooxy)butyric acid which spontaneously decarboxylates to form 3-amino-2-oxopropyl phosphate (AHAP). This chain is 4-hydroxythreonine-4-phosphate dehydrogenase, found in Synechocystis sp. (strain ATCC 27184 / PCC 6803 / Kazusa).